Reading from the N-terminus, the 222-residue chain is UPF0758 protein Mpe_A2695 (222 aa).

The region spanning 100–222 (VFDSPQAVKD…VVSFAERGLL (123 aa)) is the MPN domain. Positions 171, 173, and 184 each coordinate Zn(2+). The JAMM motif signature appears at 171 to 184 (HNHPSGVAEPSRAD).

The protein belongs to the UPF0758 family.

The polypeptide is UPF0758 protein Mpe_A2695 (Methylibium petroleiphilum (strain ATCC BAA-1232 / LMG 22953 / PM1)).